The primary structure comprises 606 residues: Chaperone protein DnaK (606 aa).

Threonine 174 bears the Phosphothreonine; by autocatalysis mark. The interval 576–606 (QAAGSANPGGSQGTSQGNVYEADYKVEDDNK) is disordered. Residues 597-606 (ADYKVEDDNK) are compositionally biased toward basic and acidic residues.

It belongs to the heat shock protein 70 family.

Its function is as follows. Acts as a chaperone. The chain is Chaperone protein DnaK from Caldanaerobacter subterraneus subsp. tengcongensis (strain DSM 15242 / JCM 11007 / NBRC 100824 / MB4) (Thermoanaerobacter tengcongensis).